Here is a 160-residue protein sequence, read N- to C-terminus: MNQIVLNIIIAFLWVLFQDEDHFKFSTFFSGYLIGLIVIYILHRFFSDDFYVRKIWVAIKFLGVYLYQLITSSISTINYILFKTKDMNPGLLSYETRLTSDWSITFLTILIIITPGSTVIRISQDSKKFFIHSIDVSEKEKDSLLRSIKHYEDLILEVSR.

The next 3 helical transmembrane spans lie at 22–42, 55–75, and 100–120; these read HFKF…IYIL, IWVA…SSIS, and SDWS…STVI.

It belongs to the CPA3 antiporters (TC 2.A.63) subunit E family. As to quaternary structure, may form a heterooligomeric complex that consists of seven subunits: mnhA2, mnhB2, mnhC2, mnhD2, mnhE2, mnhF2 and mnhG2.

It is found in the cell membrane. In Staphylococcus aureus (strain USA300), this protein is Putative antiporter subunit mnhE2 (mnhE2).